The chain runs to 403 residues: S-adenosylmethionine synthase (403 aa).

An ATP-binding site is contributed by H17. Position 19 (D19) interacts with Mg(2+). E45 is a binding site for K(+). The L-methionine site is built by E58 and Q104. Residues 104–114 form a flexible loop region; that stretch reads QSPDIAQGVDT. ATP-binding positions include 179-181, 250-251, D259, 265-266, A282, and K286; these read DGK, KF, and RK. D259 is a binding site for L-methionine. Position 290 (K290) interacts with L-methionine.

This sequence belongs to the AdoMet synthase family. As to quaternary structure, homotetramer; dimer of dimers. Mg(2+) serves as cofactor. It depends on K(+) as a cofactor.

The protein resides in the cytoplasm. The catalysed reaction is L-methionine + ATP + H2O = S-adenosyl-L-methionine + phosphate + diphosphate. The protein operates within amino-acid biosynthesis; S-adenosyl-L-methionine biosynthesis; S-adenosyl-L-methionine from L-methionine: step 1/1. Its function is as follows. Catalyzes the formation of S-adenosylmethionine (AdoMet) from methionine and ATP. The overall synthetic reaction is composed of two sequential steps, AdoMet formation and the subsequent tripolyphosphate hydrolysis which occurs prior to release of AdoMet from the enzyme. This chain is S-adenosylmethionine synthase, found in Mycobacterium ulcerans (strain Agy99).